The primary structure comprises 662 residues: MTLYDEDNINLIKDDLRYLKLLSTKYHNIPSACSEIINLQAILNLPKGTEHFISDIHGEYESFTHMLKNASGVIKRKLDDIFGTSLMDKDKDSLATLIYYPKEKLEILKESNNDLEEWYKVTLYRLIQVCKSVSSKYTRSKVRKALPKNFSYIIEELLNEQADRVNKQEYYSGIINTIVDIGCADSLIIEISKVIQKLVVDRLHIIGDIYDRGPGAEIIMDALMDHHSMDIQWGNHDILWMGAASGSKACTANVLRISLRYANLSTVEDGYGINLLPLATFAMKYYGNDPCESFIPKALDKMLDESDKNLYAKMHKAISIIQFKLEGQKIKRHPEFKLENMLLLDKINFDDGTITFEGSTYKLNDTNLPTIDPKNPYKLTKEESELIEKLQGSFLNSEKLQKHIRFMYSIGSLYLVYNSNLLFHGCIPLNEDSSFRTLNICNKEYSGKSLLDLFDKYAREAYYYKDDDNVKNYAMDMMWYLWCGPISPLFGKHKMTTFERYFIDDKKTHKEIKDPYYTYRDSEELCNRIFEEFQLDLEKSHIINGHIPVKTKNGESPVMANGKLLVIDGGFCKAYQPQTGIAGYTLIYNSYGFLLSSHEPFESTKKAIEEEQDILSSTVILENSVTRKRVMDTDIGKELKEQIKNLKKLLVAYRKGLIQENI.

Belongs to the FBPase class 3 family. It depends on Mn(2+) as a cofactor.

The catalysed reaction is beta-D-fructose 1,6-bisphosphate + H2O = beta-D-fructose 6-phosphate + phosphate. It functions in the pathway carbohydrate biosynthesis; gluconeogenesis. The sequence is that of Fructose-1,6-bisphosphatase class 3 from Clostridium tetani (strain Massachusetts / E88).